Consider the following 696-residue polypeptide: UvrABC system protein B (696 aa).

Residues glutamate 45 to proline 434 enclose the Helicase ATP-binding domain. Position 58-65 (glycine 58–threonine 65) interacts with ATP. The Beta-hairpin motif lies at tyrosine 111–valine 134. The Helicase C-terminal domain maps to glutamine 450–isoleucine 616. Positions glycine 647–glutamine 682 constitute a UVR domain.

This sequence belongs to the UvrB family. Forms a heterotetramer with UvrA during the search for lesions. Interacts with UvrC in an incision complex.

Its subcellular location is the cytoplasm. Its function is as follows. The UvrABC repair system catalyzes the recognition and processing of DNA lesions. A damage recognition complex composed of 2 UvrA and 2 UvrB subunits scans DNA for abnormalities. Upon binding of the UvrA(2)B(2) complex to a putative damaged site, the DNA wraps around one UvrB monomer. DNA wrap is dependent on ATP binding by UvrB and probably causes local melting of the DNA helix, facilitating insertion of UvrB beta-hairpin between the DNA strands. Then UvrB probes one DNA strand for the presence of a lesion. If a lesion is found the UvrA subunits dissociate and the UvrB-DNA preincision complex is formed. This complex is subsequently bound by UvrC and the second UvrB is released. If no lesion is found, the DNA wraps around the other UvrB subunit that will check the other stand for damage. This is UvrABC system protein B from Ralstonia nicotianae (strain ATCC BAA-1114 / GMI1000) (Ralstonia solanacearum).